Reading from the N-terminus, the 444-residue chain is Homogentisate 1,2-dioxygenase (444 aa).

His-298 serves as the catalytic Proton acceptor. Fe cation is bound by residues His-341 and Glu-347. Tyr-356 and His-377 together coordinate homogentisate. A Fe cation-binding site is contributed by His-377.

Belongs to the homogentisate dioxygenase family. Hexamer; dimer of trimers. Fe cation serves as cofactor.

The enzyme catalyses homogentisate + O2 = 4-maleylacetoacetate + H(+). It participates in amino-acid degradation; L-phenylalanine degradation; acetoacetate and fumarate from L-phenylalanine: step 4/6. Functionally, involved in the catabolism of homogentisate (2,5-dihydroxyphenylacetate or 2,5-OH-PhAc), a central intermediate in the degradation of phenylalanine and tyrosine. Catalyzes the oxidative ring cleavage of the aromatic ring of homogentisate to yield maleylacetoacetate. This chain is Homogentisate 1,2-dioxygenase, found in Burkholderia cenocepacia (strain ATCC BAA-245 / DSM 16553 / LMG 16656 / NCTC 13227 / J2315 / CF5610) (Burkholderia cepacia (strain J2315)).